The following is a 969-amino-acid chain: Translation initiation factor IF-2 (969 aa).

The tract at residues 96–377 is disordered; that stretch reads KRDPAEPVRA…NSRNQHQDRR (282 aa). 3 stretches are compositionally biased toward low complexity: residues 105–157, 167–181, and 216–252; these read AEPA…QAEP, AAPAQAVAEPVEPAK, and PSAPAESPKSAKAEPAAAPKTTAKPGEIRRAAAPAAP. The segment covering 253–264 has biased composition (basic and acidic residues); that stretch reads DRAREEARRAAE. Over residues 357–366 the composition is skewed to gly residues; the sequence is RAGGKGGRGG. A tr-type G domain is found at 470-637; that stretch reads PRAPVVTVMG…NVLLQAEILE (168 aa). The interval 479-486 is G1; sequence GHVDHGKT. Residue 479-486 participates in GTP binding; that stretch reads GHVDHGKT. Residues 504-508 form a G2 region; sequence GITQH. The tract at residues 525-528 is G3; that stretch reads DTPG. Residues 525 to 529 and 579 to 582 contribute to the GTP site; these read DTPGH and NKID. A G4 region spans residues 579–582; sequence NKID. A G5 region spans residues 615–617; the sequence is SAK.

The protein belongs to the TRAFAC class translation factor GTPase superfamily. Classic translation factor GTPase family. IF-2 subfamily.

It localises to the cytoplasm. In terms of biological role, one of the essential components for the initiation of protein synthesis. Protects formylmethionyl-tRNA from spontaneous hydrolysis and promotes its binding to the 30S ribosomal subunits. Also involved in the hydrolysis of GTP during the formation of the 70S ribosomal complex. The polypeptide is Translation initiation factor IF-2 (Bordetella parapertussis (strain 12822 / ATCC BAA-587 / NCTC 13253)).